Consider the following 673-residue polypeptide: Paralemmin-3 (673 aa).

2 coiled-coil regions span residues 4 to 49 (SSLY…LRER) and 75 to 101 (GQAQ…LQSA). Disordered regions lie at residues 49–78 (RWLM…GQAQ) and 99–213 (QSAS…GEAK). Positions 123 to 137 (LSQSIVEAGSVGQTD) are enriched in polar residues. Phosphoserine occurs at positions 124 and 143. Threonine 151 is modified (phosphothreonine). Residues serine 155, serine 157, and serine 260 each carry the phosphoserine modification. Disordered stretches follow at residues 295–343 (VPEV…SFIW) and 356–673 (LLVE…CAVM). Threonine 301 carries the phosphothreonine modification. A Phosphoserine modification is found at serine 325. The segment covering 327–338 (EGDGQGGSGGEE) has biased composition (gly residues). Serine 375 and serine 420 each carry phosphoserine. Basic and acidic residues-rich tracts occupy residues 392–477 (EAEK…KRGA) and 487–532 (GVEK…EKTQ). A phosphoserine mark is found at serine 544 and serine 660. Residues cysteine 667 and cysteine 669 are each lipidated (S-palmitoyl cysteine). Position 670 is a cysteine methyl ester (cysteine 670). Cysteine 670 carries S-farnesyl cysteine lipidation. Positions 671–673 (AVM) are cleaved as a propeptide — removed in mature form.

This sequence belongs to the paralemmin family. As to quaternary structure, interacts with SIGIRR. Palmitoylated on Cys-667 and Cys-669 and prenylated on Cys-670; which is required for membrane association.

The protein resides in the cytoplasm. Its subcellular location is the cell membrane. Functionally, ATP-binding protein, which may act as a adapter in the Toll-like receptor (TLR) signaling. This chain is Paralemmin-3 (PALM3), found in Homo sapiens (Human).